The chain runs to 155 residues: Protein-export protein SecB (155 aa).

It belongs to the SecB family. As to quaternary structure, homotetramer, a dimer of dimers. One homotetramer interacts with 1 SecA dimer.

The protein resides in the cytoplasm. One of the proteins required for the normal export of preproteins out of the cell cytoplasm. It is a molecular chaperone that binds to a subset of precursor proteins, maintaining them in a translocation-competent state. It also specifically binds to its receptor SecA. The sequence is that of Protein-export protein SecB from Citrobacter koseri (strain ATCC BAA-895 / CDC 4225-83 / SGSC4696).